The following is a 481-amino-acid chain: NADH-quinone oxidoreductase subunit N (481 aa).

Helical transmembrane passes span 14 to 34 (LILSVGALLLLLVAAFGGDGF), 38 to 57 (IGWGAVALFAAAGFSLTGPA), 76 to 96 (FAKLLIYIAAAVSVAVAPGFF), 108 to 128 (PVLILLSGVGMGMMVSAGDLL), 162 to 182 (FVLGALASGILLYGISLLYGF), 204 to 224 (MFGMVFVFAGLAFKISAVPFH), 235 to 255 (PTPVTAFFASAPKVAGMALLL), 272 to 292 (IVVFAALASTILGAVAAIGQT), 297 to 317 (LLAYSSINNVGFALFGLAAGS), 323 to 343 (ATMTYMAVYVAMTLGSFICVL), 369 to 389 (LAAAFAIFMFSLAGIPPLFGF), 403 to 423 (GFWPLAMVGIATSVIGAFYYL), and 449 to 469 (GLITLAALAVSPLGYLAIPLL).

The protein belongs to the complex I subunit 2 family. In terms of assembly, NDH-1 is composed of 14 different subunits. Subunits NuoA, H, J, K, L, M, N constitute the membrane sector of the complex.

It is found in the cell inner membrane. The enzyme catalyses a quinone + NADH + 5 H(+)(in) = a quinol + NAD(+) + 4 H(+)(out). In terms of biological role, NDH-1 shuttles electrons from NADH, via FMN and iron-sulfur (Fe-S) centers, to quinones in the respiratory chain. The immediate electron acceptor for the enzyme in this species is believed to be ubiquinone. Couples the redox reaction to proton translocation (for every two electrons transferred, four hydrogen ions are translocated across the cytoplasmic membrane), and thus conserves the redox energy in a proton gradient. The sequence is that of NADH-quinone oxidoreductase subunit N from Rhizorhabdus wittichii (strain DSM 6014 / CCUG 31198 / JCM 15750 / NBRC 105917 / EY 4224 / RW1) (Sphingomonas wittichii).